A 355-amino-acid chain; its full sequence is Guanine nucleotide-binding protein G(i) subunit alpha-2 (355 aa).

G2 carries N-myristoyl glycine lipidation. A lipid anchor (S-palmitoyl cysteine) is attached at C3. Positions 32–355 (REVKLLLLGA…KNNLKDCGLF (324 aa)) constitute a G-alpha domain. The segment at 35 to 48 (KLLLLGAGESGKST) is G1 motif. GTP contacts are provided by residues 40–47 (GAGESGKS), 176–182 (LRTRVKT), 201–205 (DVGGQ), 270–273 (NKKD), and A327. The Mg(2+) site is built by S47 and T182. The segment at 174 to 182 (DVLRTRVKT) is G2 motif. Positions 197–206 (FKMFDVGGQR) are G3 motif. A G4 motif region spans residues 266 to 273 (ILFLNKKD). The G5 motif stretch occupies residues 325 to 330 (TCATDT).

This sequence belongs to the G-alpha family. G(i/o/t/z) subfamily. G proteins are composed of 3 units; alpha, beta and gamma. The alpha chain contains the guanine nucleotide binding site. In this context, interacts with GNB2. Interacts with UNC5B. Interacts with GPSM1. Interacts with RGS12 and RGS14. Interacts (inactive GDP-bound form) with NUCB1 (via GBA motif); the interaction leads to activation of GNAI3. Interacts (inactive GDP-bound form) with CCDC88C/DAPLE (via GBA motif). Interacts (inactive GDP-bound form) with CCDC8A/GIV (via GBA motif).

Its subcellular location is the cytoplasm. The protein localises to the cell membrane. It is found in the cytoskeleton. It localises to the microtubule organizing center. The protein resides in the centrosome. Its subcellular location is the membrane. In terms of biological role, guanine nucleotide-binding proteins (G proteins) are involved as modulators or transducers in various transmembrane signaling systems. The G(i) proteins are involved in hormonal regulation of adenylate cyclase: they inhibit the cyclase in response to beta-adrenergic stimuli. May play a role in cell division. The sequence is that of Guanine nucleotide-binding protein G(i) subunit alpha-2 (Gnai2) from Rattus norvegicus (Rat).